A 366-amino-acid polypeptide reads, in one-letter code: 8-hydroxyquercetin 8-O-methyltransferase (366 aa).

S-adenosyl-L-methionine-binding positions include 207-210, 231-232, 251-252, and K265; these read VGGG, DL, and DM. H269 functions as the Proton acceptor in the catalytic mechanism.

Belongs to the class I-like SAM-binding methyltransferase superfamily. Cation-independent O-methyltransferase family. COMT subfamily. In terms of assembly, homodimer.

It carries out the reaction 3,3',4',5,7,8-hexahydroxyflavone + S-adenosyl-L-methionine = 3,3',4',5,7-pentahydroxy-8-methoxyflavone + S-adenosyl-L-homocysteine + H(+). It catalyses the reaction 4',7,8-trihydroxyflavone + S-adenosyl-L-methionine = 4',7-dihydroxy-8-methoxyflavone + S-adenosyl-L-homocysteine + H(+). The catalysed reaction is 8-hydroxy-7-methoxyflavone + S-adenosyl-L-methionine = 7,8-dimethoxyflavone + S-adenosyl-L-homocysteine + H(+). It participates in flavonoid metabolism. In terms of biological role, flavonoid 8-O-methyltransferase involved in the biosynthesis of polymethoxylated flavonoids natural products such as pebrellin, aroma compounds which contribute to the flavor of peppermint, and exhibit pharmacological activities such as anti-allergic, anti-oxidant, antibacterial, anti-proliferative, and anti-inflammatory effects. Catalyzes S-adenosylmethionine-dependent regioselective 8-O-methylation of flavonoids; active on various hydroxylated flavonoid substrates, including 7,8,3'4'-tetrahydroxy-flavone, 7,8,4'-trihydroxy-flavone and 8-hydroxy-flavone 7-methyl ether. This chain is 8-hydroxyquercetin 8-O-methyltransferase, found in Mentha piperita (Peppermint).